The following is a 339-amino-acid chain: Transcription initiation factor IIB (339 aa).

A TFIIB-type zinc finger spans residues 39–70 (EELICPMCGSKNIIKDYERAEIVCETCGCVLQ). Positions 43, 46, 62, and 65 each coordinate Zn(2+). A run of 2 repeats spans residues 156-239 (SELD…SREL) and 250-331 (DYVP…ELTE).

This sequence belongs to the TFIIB family.

In terms of biological role, stabilizes TBP binding to an archaeal box-A promoter. Also responsible for recruiting RNA polymerase II to the pre-initiation complex (DNA-TBP-TFIIB). The sequence is that of Transcription initiation factor IIB from Methanothermococcus thermolithotrophicus (Methanococcus thermolithotrophicus).